A 923-amino-acid chain; its full sequence is Glucosidase 2 subunit alpha (923 aa).

Positions 1–25 are cleaved as a signal peptide; the sequence is MRYHGICWFIFQAAIIFAIFGSCQG. Residue Asn-262 is glycosylated (N-linked (GlcNAc...) asparagine). The active-site Nucleophile is Asp-524. The active site involves Glu-527. Residue Asn-563 is glycosylated (N-linked (GlcNAc...) asparagine). Asp-600 serves as the catalytic Proton donor. The N-linked (GlcNAc...) asparagine glycan is linked to Asn-822.

Belongs to the glycosyl hydrolase 31 family. As to quaternary structure, heterodimer of a catalytic subunit alpha (gls2) and a subunit beta (gtb1).

It is found in the endoplasmic reticulum. The enzyme catalyses N(4)-(alpha-D-Glc-(1-&gt;3)-alpha-D-Man-(1-&gt;2)-alpha-D-Man-(1-&gt;2)-alpha-D-Man-(1-&gt;3)-[alpha-D-Man-(1-&gt;2)-alpha-D-Man-(1-&gt;3)-[alpha-D-Man-(1-&gt;2)-alpha-D-Man-(1-&gt;6)]-alpha-D-Man-(1-&gt;6)]-beta-D-Man-(1-&gt;4)-beta-D-GlcNAc-(1-&gt;4)-beta-D-GlcNAc)-L-asparaginyl-[protein] + H2O = N(4)-(alpha-D-Man-(1-&gt;2)-alpha-D-Man-(1-&gt;2)-alpha-D-Man-(1-&gt;3)-[alpha-D-Man-(1-&gt;2)-alpha-D-Man-(1-&gt;3)-[alpha-D-Man-(1-&gt;2)-alpha-D-Man-(1-&gt;6)]-alpha-D-Man-(1-&gt;6)]-beta-D-Man-(1-&gt;4)-beta-D-GlcNAc-(1-&gt;4)-beta-D-GlcNAc)-L-asparaginyl-[protein] (N-glucan mannose isomer 9A1,2,3B1,2,3) + beta-D-glucose. It catalyses the reaction N(4)-(alpha-D-Glc-(1-&gt;3)-alpha-D-Glc-(1-&gt;3)-alpha-D-Man-(1-&gt;2)-alpha-D-Man-(1-&gt;2)-alpha-D-Man-(1-&gt;3)-[alpha-D-Man-(1-&gt;2)-alpha-D-Man-(1-&gt;3)-[alpha-D-Man-(1-&gt;2)-alpha-D-Man-(1-&gt;6)]-alpha-D-Man-(1-&gt;6)]-beta-D-Man-(1-&gt;4)-beta-D-GlcNAc-(1-&gt;4)-beta-D-GlcNAc)-L-asparaginyl-[protein] + H2O = N(4)-(alpha-D-Glc-(1-&gt;3)-alpha-D-Man-(1-&gt;2)-alpha-D-Man-(1-&gt;2)-alpha-D-Man-(1-&gt;3)-[alpha-D-Man-(1-&gt;2)-alpha-D-Man-(1-&gt;3)-[alpha-D-Man-(1-&gt;2)-alpha-D-Man-(1-&gt;6)]-alpha-D-Man-(1-&gt;6)]-beta-D-Man-(1-&gt;4)-beta-D-GlcNAc-(1-&gt;4)-beta-D-GlcNAc)-L-asparaginyl-[protein] + beta-D-glucose. It functions in the pathway glycan metabolism; N-glycan metabolism. Functionally, catalytic subunit of glucosidase 2, which cleaves sequentially the 2 innermost alpha-1,3-linked glucose residues from the Glc(2)Man(9)GlcNAc(2) oligosaccharide precursor of immature glycoproteins. In Schizosaccharomyces pombe (strain 972 / ATCC 24843) (Fission yeast), this protein is Glucosidase 2 subunit alpha.